A 1102-amino-acid polypeptide reads, in one-letter code: Carbamoyl phosphate synthase large chain (1102 aa).

The tract at residues 1-408 (MPKRSDIQSV…ALQKALRSLE (408 aa)) is carboxyphosphate synthetic domain. ATP-binding residues include arginine 129, arginine 175, glycine 181, glycine 182, glutamate 214, isoleucine 216, glutamate 221, glycine 247, valine 248, histidine 249, glutamine 291, and glutamate 305. Positions 137–334 (EAVKEKIGYG…IAKIAAKLAV (198 aa)) constitute an ATP-grasp 1 domain. Mg(2+) contacts are provided by glutamine 291, glutamate 305, and asparagine 307. Positions 291, 305, and 307 each coordinate Mn(2+). The tract at residues 409–551 (KKGSQFAFTG…YFYSSYDEES (143 aa)) is oligomerization domain. The tract at residues 552-954 (EVAPRTKPAV…AYAKSQAGAY (403 aa)) is carbamoyl phosphate synthetic domain. The ATP-grasp 2 domain maps to 682–873 (GRVLAEAGLP…LAKAAARISL (192 aa)). ATP is bound by residues arginine 718, arginine 757, leucine 759, glutamate 764, glycine 789, isoleucine 790, histidine 791, serine 792, glutamine 832, and glutamate 844. Mg(2+) is bound by residues glutamine 832, glutamate 844, and asparagine 846. Residues glutamine 832, glutamate 844, and asparagine 846 each contribute to the Mn(2+) site. Residues 955-1100 (GPLPTAGRAF…QEHAEHLTAA (146 aa)) enclose the MGS-like domain. The allosteric domain stretch occupies residues 955–1102 (GPLPTAGRAF…HAEHLTAARD (148 aa)).

Belongs to the CarB family. As to quaternary structure, composed of two chains; the small (or glutamine) chain promotes the hydrolysis of glutamine to ammonia, which is used by the large (or ammonia) chain to synthesize carbamoyl phosphate. Tetramer of heterodimers (alpha,beta)4. It depends on Mg(2+) as a cofactor. The cofactor is Mn(2+).

The enzyme catalyses hydrogencarbonate + L-glutamine + 2 ATP + H2O = carbamoyl phosphate + L-glutamate + 2 ADP + phosphate + 2 H(+). It carries out the reaction hydrogencarbonate + NH4(+) + 2 ATP = carbamoyl phosphate + 2 ADP + phosphate + 2 H(+). It functions in the pathway amino-acid biosynthesis; L-arginine biosynthesis; carbamoyl phosphate from bicarbonate: step 1/1. Its pathway is pyrimidine metabolism; UMP biosynthesis via de novo pathway; (S)-dihydroorotate from bicarbonate: step 1/3. Large subunit of the glutamine-dependent carbamoyl phosphate synthetase (CPSase). CPSase catalyzes the formation of carbamoyl phosphate from the ammonia moiety of glutamine, carbonate, and phosphate donated by ATP, constituting the first step of 2 biosynthetic pathways, one leading to arginine and/or urea and the other to pyrimidine nucleotides. The large subunit (synthetase) binds the substrates ammonia (free or transferred from glutamine from the small subunit), hydrogencarbonate and ATP and carries out an ATP-coupled ligase reaction, activating hydrogencarbonate by forming carboxy phosphate which reacts with ammonia to form carbamoyl phosphate. The protein is Carbamoyl phosphate synthase large chain of Streptomyces griseus subsp. griseus (strain JCM 4626 / CBS 651.72 / NBRC 13350 / KCC S-0626 / ISP 5235).